A 714-amino-acid chain; its full sequence is K(+)-insensitive pyrophosphate-energized proton pump (714 aa).

A signal peptide spans 1 to 20 (MRMTVIPIVILCGVLSVVYA). 4 helical membrane-spanning segments follow: residues 52–74 (LTRQ…WYLL), 85–105 (GAVL…RANL), 128–148 (ITGM…YFVL), and 166–186 (VSLG…GGIF). A substrate-binding site is contributed by Lys188. Residues Asp191, Asp195, Asn218, and Asp221 each contribute to the Mg(2+) site. A run of 6 helical transmembrane segments spans residues 238–258 (AVSV…TPIL), 263–283 (VYPL…TFFV), 298–318 (GLIA…YATV), 333–353 (GTNL…IVVI), 383–403 (GLAV…GGII), and 411–431 (LFGT…IVAL). A Mg(2+)-binding site is contributed by Asp439. Helical transmembrane passes span 470–490 (AVTK…LFAA), 522–542 (YVVA…GIAM), 591–611 (VIPS…VLLI), and 618–638 (AFAA…FVAI). 3 residues coordinate Ca(2+): Asp648, Asp680, and Asp684. Residue Lys687 coordinates substrate. A helical transmembrane segment spans residues 693–713 (AVNPAIKITNIVALLLLAVLA).

Belongs to the H(+)-translocating pyrophosphatase (TC 3.A.10) family. K(+)-insensitive subfamily. Homodimer. Requires Mg(2+) as cofactor.

It is found in the acidocalcisome membrane. The enzyme catalyses diphosphate + H2O + H(+)(in) = 2 phosphate + 2 H(+)(out). In terms of biological role, proton pump that utilizes the energy of pyrophosphate hydrolysis as the driving force for proton movement across the membrane. Generates a proton motive force. This chain is K(+)-insensitive pyrophosphate-energized proton pump, found in Agrobacterium fabrum (strain C58 / ATCC 33970) (Agrobacterium tumefaciens (strain C58)).